Here is a 72-residue protein sequence, read N- to C-terminus: Translation initiation factor IF-1 (72 aa).

One can recognise an S1-like domain in the interval methionine 1–lysine 72.

Belongs to the IF-1 family. In terms of assembly, component of the 30S ribosomal translation pre-initiation complex which assembles on the 30S ribosome in the order IF-2 and IF-3, IF-1 and N-formylmethionyl-tRNA(fMet); mRNA recruitment can occur at any time during PIC assembly.

It localises to the cytoplasm. Its function is as follows. One of the essential components for the initiation of protein synthesis. Stabilizes the binding of IF-2 and IF-3 on the 30S subunit to which N-formylmethionyl-tRNA(fMet) subsequently binds. Helps modulate mRNA selection, yielding the 30S pre-initiation complex (PIC). Upon addition of the 50S ribosomal subunit IF-1, IF-2 and IF-3 are released leaving the mature 70S translation initiation complex. The protein is Translation initiation factor IF-1 of Corynebacterium diphtheriae (strain ATCC 700971 / NCTC 13129 / Biotype gravis).